Here is a 276-residue protein sequence, read N- to C-terminus: Ribosomal RNA small subunit methyltransferase A (276 aa).

6 residues coordinate S-adenosyl-L-methionine: His-15, Leu-17, Gly-42, Glu-64, Asp-89, and Asn-108.

The protein belongs to the class I-like SAM-binding methyltransferase superfamily. rRNA adenine N(6)-methyltransferase family. RsmA subfamily.

Its subcellular location is the cytoplasm. The catalysed reaction is adenosine(1518)/adenosine(1519) in 16S rRNA + 4 S-adenosyl-L-methionine = N(6)-dimethyladenosine(1518)/N(6)-dimethyladenosine(1519) in 16S rRNA + 4 S-adenosyl-L-homocysteine + 4 H(+). Its function is as follows. Specifically dimethylates two adjacent adenosines (A1518 and A1519) in the loop of a conserved hairpin near the 3'-end of 16S rRNA in the 30S particle. May play a critical role in biogenesis of 30S subunits. The sequence is that of Ribosomal RNA small subunit methyltransferase A from Prochlorococcus marinus (strain MIT 9312).